Reading from the N-terminus, the 246-residue chain is Probable 2-phosphosulfolactate phosphatase (246 aa).

The protein belongs to the ComB family. Mg(2+) serves as cofactor.

The catalysed reaction is (2R)-O-phospho-3-sulfolactate + H2O = (2R)-3-sulfolactate + phosphate. The protein is Probable 2-phosphosulfolactate phosphatase of Synechococcus sp. (strain WH7803).